Reading from the N-terminus, the 218-residue chain is MPLDVKICGLSTRATCDAALAAGADMVGLVFFSASPRHVDLGTAADLARAAQGRASVVALTVDADDAQLAAIVETVRPDLLQLHGRESPARVAEIKRRFALPVMKALPIATRDDLAALPDYAAVADRILFDARAPKGATRPGGLGVAFDWTLLRDLELTLPFMVSGGLTLDNVADALRITRAGGVDISSGVESAPGVKDPELIRAFIRAARATERLSV.

It belongs to the TrpF family.

The enzyme catalyses N-(5-phospho-beta-D-ribosyl)anthranilate = 1-(2-carboxyphenylamino)-1-deoxy-D-ribulose 5-phosphate. It participates in amino-acid biosynthesis; L-tryptophan biosynthesis; L-tryptophan from chorismate: step 3/5. In Rhodopseudomonas palustris (strain BisA53), this protein is N-(5'-phosphoribosyl)anthranilate isomerase.